A 1012-amino-acid polypeptide reads, in one-letter code: Klotho (1012 aa).

Residues 1-33 (MPASAPPRRPRPPPPSLSLLLVLLGLGGRRLRA) form the signal peptide. Residues 34-981 (EPGDGAQTWA…ECSFFHTRKS (948 aa)) lie on the Extracellular side of the membrane. Glycosyl hydrolase-1 regions lie at residues 57-506 (FQGT…KNGF) and 515-953 (LEGT…SNGF). N-linked (GlcNAc...) asparagine glycosylation is found at Asn-106, Asn-159, Asn-283, Asn-344, Asn-607, Asn-612, and Asn-694. A helical transmembrane segment spans residues 982–1002 (LLAFIAFLFFASIISLSLIFY). The Cytoplasmic segment spans residues 1003 to 1012 (YSKKGRRSYK).

The protein belongs to the glycosyl hydrolase 1 family. Klotho subfamily. As to quaternary structure, homodimer. Interacts with FGF23 and FGFR1. In terms of processing, N-glycosylated. Present in cortical renal tubules (at protein level). Soluble peptide is present in serum and cerebrospinal fluid. Expressed in kidney, placenta, small intestine and prostate. Down-regulated in renal cell carcinomas, hepatocellular carcinomas, and in chronic renal failure kidney.

The protein resides in the cell membrane. It localises to the apical cell membrane. The protein localises to the secreted. It catalyses the reaction a beta-D-glucuronoside + H2O = D-glucuronate + an alcohol. Functionally, may have weak glycosidase activity towards glucuronylated steroids. However, it lacks essential active site Glu residues at positions 239 and 872, suggesting it may be inactive as a glycosidase in vivo. May be involved in the regulation of calcium and phosphorus homeostasis by inhibiting the synthesis of active vitamin D. Essential factor for the specific interaction between FGF23 and FGFR1. In terms of biological role, the Klotho peptide generated by cleavage of the membrane-bound isoform may be an anti-aging circulating hormone which would extend life span by inhibiting insulin/IGF1 signaling. The protein is Klotho (KL) of Homo sapiens (Human).